We begin with the raw amino-acid sequence, 515 residues long: MKKLQASVRSHKKQPANHKRRRTRALSSSQAKPSSLDGLAKQKREELLQASVSPYHLFSDVADVTAFRSNLLSWYDQEKRDLPWRNLAKEEANSDRRAYAVWVSEVMLQQTQVATVIDYYTRWMQKWPKLQDLASASLEEVNQLWSGLGYYSRGRRLQEGARKVVEELGGHMPRTAETLQQLLPGVGRYTAGAIASIAFDQVTGVVDGNVLRVLCRVRAIGADPTSTLVSHHLWNLAQQLVDPARPGDFNQAAMELGATVCTPQRPLCSHCPVQSLCRAYQRVQRGQLSALPGRPDIEECALNTRQCQLCLTSSSPWDPSMGVANFPRKASRRPPREEYSATCVVEQPGAIGGPLVLLVQRPDSGLLAGLWEFPSVTLEPSEQHQHKALLQELQRWCGPLPAIRLQHLGEVIHIFSHIKLTYQVYSLALDQAPASTAPPGARWLTWEEFCNAAVSTAMKKVFRMYEDHRQGTRKGSKRSQVCPPSSRKKPSLGQQVLDTFFQRHIPTDKPNSTTQ.

The span at 1–24 (MKKLQASVRSHKKQPANHKRRRTR) shows a compositional bias: basic residues. The disordered stretch occupies residues 1–38 (MKKLQASVRSHKKQPANHKRRRTRALSSSQAKPSSLDG). The Proton donor/acceptor role is filled by glutamate 105. [4Fe-4S] cluster is bound by residues cysteine 261, cysteine 268, cysteine 271, and cysteine 277. The Nudix hydrolase domain occupies 335–466 (PREEYSATCV…AMKKVFRMYE (132 aa)). The Nudix box motif lies at 376–398 (VTLEPSEQHQHKALLQELQRWCG). The interval 468–494 (HRQGTRKGSKRSQVCPPSSRKKPSLGQ) is disordered.

Belongs to the Nth/MutY family. [4Fe-4S] cluster serves as cofactor. As to expression, expressed in heart, lung, liver, intestine, brain and thymus.

It is found in the nucleus. Its subcellular location is the mitochondrion. It catalyses the reaction Hydrolyzes free adenine bases from 7,8-dihydro-8-oxoguanine:adenine mismatched double-stranded DNA, leaving an apurinic site.. Involved in oxidative DNA damage repair. Initiates repair of A*oxoG to C*G by removing the inappropriately paired adenine base from the DNA backbone. Possesses both adenine and 2-OH-A DNA glycosylase activities. The chain is Adenine DNA glycosylase (Mutyh) from Mus musculus (Mouse).